We begin with the raw amino-acid sequence, 193 residues long: MEVDLLHFEKKYHNCIVAGIDEAGRGPLAGPVVASAVIVDNANIITGIKDSKKLSKKKRELLYEQITSNYVWATAIISHTEIDDINILEATKKACSIAVANLSLEPEIVLVDGNMQFKDERFVSIINGDNLSLSIAAASIVAKVTRDRLMLDLSAEFPQYLWHKNSGYGTKEHIEAINIHGLSPYHRRSFRCC.

Positions 15–193 constitute an RNase H type-2 domain; the sequence is CIVAGIDEAG…PYHRRSFRCC (179 aa). 3 residues coordinate a divalent metal cation: D21, E22, and D112.

Belongs to the RNase HII family. The cofactor is Mn(2+). It depends on Mg(2+) as a cofactor.

The protein localises to the cytoplasm. It catalyses the reaction Endonucleolytic cleavage to 5'-phosphomonoester.. Its function is as follows. Endonuclease that specifically degrades the RNA of RNA-DNA hybrids. This chain is Ribonuclease HII, found in Rickettsia conorii (strain ATCC VR-613 / Malish 7).